A 357-amino-acid chain; its full sequence is Phosphoribosylformylglycinamidine cyclo-ligase (357 aa).

It belongs to the AIR synthase family.

It is found in the cytoplasm. The enzyme catalyses 2-formamido-N(1)-(5-O-phospho-beta-D-ribosyl)acetamidine + ATP = 5-amino-1-(5-phospho-beta-D-ribosyl)imidazole + ADP + phosphate + H(+). Its pathway is purine metabolism; IMP biosynthesis via de novo pathway; 5-amino-1-(5-phospho-D-ribosyl)imidazole from N(2)-formyl-N(1)-(5-phospho-D-ribosyl)glycinamide: step 2/2. The polypeptide is Phosphoribosylformylglycinamidine cyclo-ligase (Allorhizobium ampelinum (strain ATCC BAA-846 / DSM 112012 / S4) (Agrobacterium vitis (strain S4))).